We begin with the raw amino-acid sequence, 374 residues long: Flagellar P-ring protein 1 (374 aa).

The N-terminal stretch at 1-26 is a signal peptide; it reads MVPNLMVIKKHLIGLLLILCPLSLQA.

Belongs to the FlgI family. As to quaternary structure, the basal body constitutes a major portion of the flagellar organelle and consists of four rings (L,P,S, and M) mounted on a central rod.

The protein resides in the periplasm. It localises to the bacterial flagellum basal body. Its function is as follows. Assembles around the rod to form the L-ring and probably protects the motor/basal body from shearing forces during rotation. This Photobacterium profundum (strain SS9) protein is Flagellar P-ring protein 1.